A 173-amino-acid chain; its full sequence is Large ribosomal RNA subunit accumulation protein YceD (173 aa).

Belongs to the DUF177 domain family.

In terms of biological role, plays a role in synthesis, processing and/or stability of 23S rRNA. The sequence is that of Large ribosomal RNA subunit accumulation protein YceD (yceD) from Escherichia coli O157:H7.